The following is a 132-amino-acid chain: Large ribosomal subunit protein bL19 (132 aa).

It belongs to the bacterial ribosomal protein bL19 family.

Functionally, this protein is located at the 30S-50S ribosomal subunit interface and may play a role in the structure and function of the aminoacyl-tRNA binding site. In Nitrosomonas europaea (strain ATCC 19718 / CIP 103999 / KCTC 2705 / NBRC 14298), this protein is Large ribosomal subunit protein bL19.